The following is a 100-amino-acid chain: Small ribosomal subunit protein uS14c (100 aa).

Belongs to the universal ribosomal protein uS14 family. In terms of assembly, part of the 30S ribosomal subunit.

Its subcellular location is the plastid. The protein resides in the chloroplast. Binds 16S rRNA, required for the assembly of 30S particles. The chain is Small ribosomal subunit protein uS14c from Euglena gracilis.